The following is a 402-amino-acid chain: UDP-N-acetylmuramoylalanine--D-glutamate ligase (402 aa).

97–103 (GTNGKTT) serves as a coordination point for ATP.

Belongs to the MurCDEF family.

It is found in the cytoplasm. The enzyme catalyses UDP-N-acetyl-alpha-D-muramoyl-L-alanine + D-glutamate + ATP = UDP-N-acetyl-alpha-D-muramoyl-L-alanyl-D-glutamate + ADP + phosphate + H(+). It participates in cell wall biogenesis; peptidoglycan biosynthesis. In terms of biological role, cell wall formation. Catalyzes the addition of glutamate to the nucleotide precursor UDP-N-acetylmuramoyl-L-alanine (UMA). The sequence is that of UDP-N-acetylmuramoylalanine--D-glutamate ligase from Campylobacter jejuni subsp. jejuni serotype O:6 (strain 81116 / NCTC 11828).